The chain runs to 263 residues: Aminoglycoside 3'-phosphotransferase (263 aa).

Aspartate 189 acts as the Proton acceptor in catalysis.

The protein belongs to the aminoglycoside phosphotransferase family.

The catalysed reaction is kanamycin A + ATP = kanamycin 3'-phosphate + ADP + H(+). Resistance to kanamycin and structurally-related aminoglycosides, including amikacin. The sequence is that of Aminoglycoside 3'-phosphotransferase (aphA) from Staphylococcus aureus.